The sequence spans 140 residues: Low calcium response locus protein T (140 aa).

This is Low calcium response locus protein T (lcrT) from Yersinia pestis.